Reading from the N-terminus, the 1460-residue chain is Nucleoporin NUP159 (1460 aa).

Residues 1–500 are interaction with DBP5; it reads MSSLKDEVPT…SEQDATDPAS (500 aa). One copy of the FG 1 repeat lies at 228–231; sequence AVFG. Residues 267-270 form a PXFG 1 repeat; it reads PPFG. The tract at residues 401 to 435 is disordered; that stretch reads KSLSPTSEKIPIAGQEQEEKKKNNESSKALSENPF. S404 bears the Phosphoserine mark. The SXFGXPXFG 1 repeat unit spans residues 462 to 470; sequence STFGAPSFG. The segment at 483–504 is disordered; that stretch reads STSTGVASSEQDATDPASAKPV. Residues 497–701 form an interactions with CRM1 and GLE1 region; the sequence is DPASAKPVFG…KPNTSTKPKT (205 aa). The SXFGXPXFG 2; approximate repeat unit spans residues 503 to 511; the sequence is PVFGKPAFG. An SXFGXPXFG 3; approximate repeat occupies 522–530; the sequence is YAFGKPSFG. Residues 532-535 form a PXFG 2 repeat; the sequence is PSFG. Residues 533-619 are disordered; that stretch reads SFGSGKSSVE…SAFGTASSNE (87 aa). Composition is skewed to polar residues over residues 536-546, 556-567, 582-593, and 607-619; these read SGKSSVESPAS, GTPSFGSGNSSV, GTPSFGSGNSSA, and FGTSAFGTASSNE. The SXFGXPXFG 4 repeat unit spans residues 548–556; the sequence is SAFGKPSFG. The PXFG 3 repeat unit spans residues 558–561; the sequence is PSFG. One copy of the SXFGXPXFG 5 repeat lies at 574 to 582; the sequence is SAFGKPSFG. The stretch at 584 to 587 is one PXFG 4 repeat; the sequence is PSFG. The stretch at 600–608 is one SXFGXPXFG 6 repeat; that stretch reads SAFGKPSFG. An SXFG 1 repeat occupies 610–613; sequence SAFG. Residues 624-632 form an SXFGXPXFG 7; approximate repeat; sequence SIFGKAAFG. An FG 2 repeat occupies 642–645; the sequence is ELFG. The interval 647 to 704 is disordered; it reads NFTISKPTVDSPKEVDSTSPFPSSGDQSEDESKSDVDSSSTPFGTKPNTSTKPKTNAF. S657 carries the phosphoserine modification. Over residues 683–704 the composition is skewed to low complexity; the sequence is DSSSTPFGTKPNTSTKPKTNAF. One copy of the FG 3 repeat lies at 687–690; it reads TPFG. One copy of the FXFG 1 repeat lies at 704-707; it reads FDFG. The SXFG 2 repeat unit spans residues 709-712; the sequence is SSFG. The residue at position 724 (S724) is a Phosphoserine. 3 stretches are compositionally biased toward polar residues: residues 727 to 750, 757 to 767, and 778 to 800; these read TFKFGTQASPFSSQLGNKSPFSSF, NGSLSKGSTSE, and NGPNVSGNDLTDSTVEQTSSTRL. The segment at 727–824 is disordered; that stretch reads TFKFGTQASP…EAQKSPIGKL (98 aa). Residues 728 to 731 form an FXFG 2 repeat; the sequence is FKFG. 2 positions are modified to phosphoserine: S735 and S745. T803 is subject to Phosphothreonine. Residues 804–814 are compositionally biased toward acidic residues; that stretch reads PSDEDGEVVEE. A phosphoserine mark is found at S805 and S819. Residues 842-845 form a PXFG 5 repeat; that stretch reads PVFG. Positions 861–889 are enriched in polar residues; it reads TNITKPSSTTPAFSFGNSTMNKSNTSTVS. The segment at 861–1092 is disordered; it reads TNITKPSSTT…DINTDELPHG (232 aa). The FXFG 3 repeat unit spans residues 873–876; it reads FSFG. Residue S889 is modified to Phosphoserine. A compositionally biased stretch (basic and acidic residues) spans 917 to 936; it reads AKEERTGESSKKDHNDDPKD. Residue S940 is modified to Phosphoserine. Over residues 942-958 the composition is skewed to polar residues; that stretch reads SEISVRTSESAFDTTAN. Composition is skewed to basic and acidic residues over residues 960–1002, 1017–1027, 1035–1061, and 1068–1092; these read EIPK…KNNE, ALKKDNEKENF, QFEDHQSSEEDASEKDSRQSSEVKESD, and SDRDESISESYDKLEDINTDELPHG. Residues 1086 to 1175 are interaction with DYN2; it reads TDELPHGGEA…TCNFSVQTFE (90 aa). The interval 1223-1460 is interaction with NUP82; it reads AEFTVLMENI…DFFKNLNMAK (238 aa). Coiled-coil stretches lie at residues 1279–1320 and 1383–1418; these read EQMQ…YLFL and AKLAKESLARDGLLKEIKLLREQVSRLQLEEKGKKA.

In terms of assembly, component of the nuclear pore complex (NPC). NPC constitutes the exclusive means of nucleocytoplasmic transport. NPCs allow the passive diffusion of ions and small molecules and the active, nuclear transport receptor-mediated bidirectional transport of macromolecules such as proteins, RNAs, ribonucleoparticles (RNPs), and ribosomal subunits across the nuclear envelope. Due to its 8-fold rotational symmetry, all subunits are present with 8 copies or multiples thereof. Part of the NUP82 subcomplex, interacts with NUP82 through its C-terminal coiled coil. This subcomplex is the base for interactions with NUP116 and GLE2, with NUP42 and GLE1 and with DYN2. Interacts directly with DYN2. Interacts through its FG repeats with karyopherins, such as heterodimeric mRNA transport factor MEX67/MTR2, CRM1 (XPO1), and PSE1 (GSP1-GDP dependent). Interaction with CRM1 (XPO1) is GSP1-GTP dependent and stimulated by RNA1. NUP159 also interacts with GLE1 and the ATP-dependent RNA helicase DBP5.

It localises to the nucleus. It is found in the nuclear pore complex. Its subcellular location is the nucleus membrane. Functionally, functions as a component of the nuclear pore complex (NPC). NPC components, collectively referred to as nucleoporins (NUPs), can play the role of both NPC structural components and of docking or interaction partners for transiently associated nuclear transport factors. Active directional transport is assured by both, a Phe-Gly (FG) repeat affinity gradient for these transport factors across the NPC and a transport cofactor concentration gradient across the nuclear envelope (GSP1 and GSP2 GTPases associated predominantly with GTP in the nucleus, with GDP in the cytoplasm). NUP159 plays an important role in several nuclear export pathways including poly(A)+ RNA, pre-ribosome, and protein export. In Saccharomyces cerevisiae (strain ATCC 204508 / S288c) (Baker's yeast), this protein is Nucleoporin NUP159 (NUP159).